A 1141-amino-acid chain; its full sequence is Myosin-binding protein C, fast-type (1141 aa).

The segment at 1 to 62 is disordered; the sequence is MPEAKPAAKK…VFLKKPDSVS (62 aa). Basic and acidic residues predominate over residues 13 to 39; that stretch reads KGKDAPKGAPKEAPPKEAPAEAPKEAP. 5 Ig-like C2-type domains span residues 50 to 153, 255 to 344, 345 to 437, 438 to 538, and 539 to 638; these read PTGV…NIDV, SAAF…VKEP, PVLI…VEEK, QLEV…KQEP, and PKIH…VVDV. 2 consecutive Fibronectin type-III domains span residues 641 to 737 and 739 to 834; these read PPEA…IAPT and EPLH…IREI. Residues 838 to 932 form the Ig-like C2-type 6 domain; it reads PKIRLPRHLR…ATIRIRVVEK (95 aa). A Fibronectin type-III 3 domain is found at 935–1030; sequence PPINVMVKEV…SKNTARILKT (96 aa). Residues 1048 to 1141 enclose the Ig-like C2-type 7 domain; it reads PKFLTPLIDR…ECKLEVRVPQ (94 aa).

It belongs to the immunoglobulin superfamily. MyBP family.

Its function is as follows. Thick filament-associated protein located in the crossbridge region of vertebrate striated muscle a bands. In vitro it binds MHC, F-actin and native thin filaments, and modifies the activity of actin-activated myosin ATPase. It may modulate muscle contraction or may play a more structural role. The polypeptide is Myosin-binding protein C, fast-type (MYBPC2) (Homo sapiens (Human)).